We begin with the raw amino-acid sequence, 216 residues long: Transmembrane emp24 domain-containing protein eca (216 aa).

Positions 1 to 20 are cleaved as a signal peptide; that stretch reads MRDQFISLALILCVLHSACG. Over 21–182 the chain is Lumenal; it reads LYFHISETER…FRHTSESTNS (162 aa). One can recognise a GOLD domain in the interval 30–126; that stretch reads RKCFIEEVPD…QLRVHLDIQV (97 aa). Residues 134–164 adopt a coiled-coil conformation; it reads ANVAQKEKLTELQLRIRQLLDQVEQITKEQN. The helical transmembrane segment at 183-203 threads the bilayer; it reads RVLWWSLAQTIVLVCMGFWQM. At 204–216 the chain is on the cytoplasmic side; that stretch reads RHLKSFFEAKKLV. A Prevents secretion from ER motif is present at residues 213-216; it reads KKLV.

Belongs to the EMP24/GP25L family.

Its subcellular location is the endoplasmic reticulum membrane. Functionally, eca and bai are essential, though not redundant, for dorsoventral patterning of the embryo. Specifically required during early embryogenesis for the activity of maternal tkv, while the zygotic tkv is not affected. Involved in Golgi organization. This chain is Transmembrane emp24 domain-containing protein eca, found in Drosophila sechellia (Fruit fly).